We begin with the raw amino-acid sequence, 382 residues long: Queuine tRNA-ribosyltransferase (382 aa).

The Proton acceptor role is filled by D96. Substrate contacts are provided by residues 96-100, D151, Q194, and G221; that span reads DSGGF. The tract at residues 252–258 is RNA binding; sequence GVGAPDS. D271 (nucleophile) is an active-site residue. Residues 276-280 are RNA binding; important for wobble base 34 recognition; that stretch reads TRIAR. Zn(2+)-binding residues include C309, C311, C314, and H340.

Belongs to the queuine tRNA-ribosyltransferase family. As to quaternary structure, homodimer. Within each dimer, one monomer is responsible for RNA recognition and catalysis, while the other monomer binds to the replacement base PreQ1. Zn(2+) serves as cofactor.

The catalysed reaction is 7-aminomethyl-7-carbaguanine + guanosine(34) in tRNA = 7-aminomethyl-7-carbaguanosine(34) in tRNA + guanine. The protein operates within tRNA modification; tRNA-queuosine biosynthesis. Its function is as follows. Catalyzes the base-exchange of a guanine (G) residue with the queuine precursor 7-aminomethyl-7-deazaguanine (PreQ1) at position 34 (anticodon wobble position) in tRNAs with GU(N) anticodons (tRNA-Asp, -Asn, -His and -Tyr). Catalysis occurs through a double-displacement mechanism. The nucleophile active site attacks the C1' of nucleotide 34 to detach the guanine base from the RNA, forming a covalent enzyme-RNA intermediate. The proton acceptor active site deprotonates the incoming PreQ1, allowing a nucleophilic attack on the C1' of the ribose to form the product. After dissociation, two additional enzymatic reactions on the tRNA convert PreQ1 to queuine (Q), resulting in the hypermodified nucleoside queuosine (7-(((4,5-cis-dihydroxy-2-cyclopenten-1-yl)amino)methyl)-7-deazaguanosine). The protein is Queuine tRNA-ribosyltransferase of Lactococcus lactis subsp. cremoris (strain MG1363).